A 148-amino-acid polypeptide reads, in one-letter code: Large-conductance mechanosensitive channel (148 aa).

2 helical membrane-spanning segments follow: residues 9 to 29 (AFAVKGNVVDMAVGIIIGAAF) and 79 to 99 (IQTVIDFIIVAFAIFMGVKAI).

Belongs to the MscL family. As to quaternary structure, homopentamer.

It is found in the cell inner membrane. Its function is as follows. Channel that opens in response to stretch forces in the membrane lipid bilayer. May participate in the regulation of osmotic pressure changes within the cell. This chain is Large-conductance mechanosensitive channel, found in Pseudomonas syringae pv. syringae (strain B728a).